We begin with the raw amino-acid sequence, 92 residues long: FMRFamide-like neuropeptides 5 (92 aa).

The propeptide occupies 1–41 (MSSRSTTIAFLFIATLLVFQCVSAQSSAEDADYLEKYQRIA). F51 and F61 each carry phenylalanine amide. A propeptide spanning residues 64–82 (SRNTWEDGYASPSVNELYV) is cleaved from the precursor. F91 bears the Phenylalanine amide mark.

It belongs to the FARP (FMRFamide related peptide) family. In terms of tissue distribution, each flp gene is expressed in a distinct set of neurons. Flp-5 is expressed in the ASE sensory neurons, the 14 and M4 cholinergic pharyngeal motoneurons, and the PVT and RMG neurons. It is weakly expressed in the PB and 12 neurons. Also expressed in pharyngeal muscle.

The protein resides in the secreted. FMRFamides and FMRFamide-like peptides are neuropeptides. GAKFIRF-amide has an excitatory effect on dissected pharyngeal myogenic muscle system. This is FMRFamide-like neuropeptides 5 from Caenorhabditis elegans.